We begin with the raw amino-acid sequence, 486 residues long: Cardiolipin synthase A (486 aa).

2 consecutive transmembrane segments (helical) span residues 3 to 23 and 38 to 58; these read TFYTVISWLSVFGYWLLIAGV and MAWLLIIYILPLVGIIAYLSF. PLD phosphodiesterase domains follow at residues 219–246 and 399–426; these read MDLRQHRKIVLIDNYVAYTGSMNMVDPR and EGGLLHSKSVLVDGQLSLVGTVNLDMRS. Residues His224, Lys226, Asp231, His404, Lys406, and Asp411 contribute to the active site.

This sequence belongs to the phospholipase D family. Cardiolipin synthase subfamily. ClsA sub-subfamily.

The protein localises to the cell inner membrane. It catalyses the reaction 2 a 1,2-diacyl-sn-glycero-3-phospho-(1'-sn-glycerol) = a cardiolipin + glycerol. Catalyzes the reversible phosphatidyl group transfer from one phosphatidylglycerol molecule to another to form cardiolipin (CL) (diphosphatidylglycerol) and glycerol. This Yersinia pseudotuberculosis serotype IB (strain PB1/+) protein is Cardiolipin synthase A.